The sequence spans 965 residues: Valine--tRNA ligase (965 aa).

Positions 1-22 are disordered; sequence MENTPSHINKTEPSLDKTYSPQ. The 'HIGH' region signature appears at 56–66; it reads PNVTGSLHMGH. A 'KMSKS' region motif is present at residues 568–572; sequence KMSKS. Lys-571 lines the ATP pocket. Residues 896 to 965 adopt a coiled-coil conformation; that stretch reads LIDKATELDR…IEQQATIAAL (70 aa).

Belongs to the class-I aminoacyl-tRNA synthetase family. ValS type 1 subfamily. In terms of assembly, monomer.

The protein resides in the cytoplasm. It catalyses the reaction tRNA(Val) + L-valine + ATP = L-valyl-tRNA(Val) + AMP + diphosphate. Functionally, catalyzes the attachment of valine to tRNA(Val). As ValRS can inadvertently accommodate and process structurally similar amino acids such as threonine, to avoid such errors, it has a 'posttransfer' editing activity that hydrolyzes mischarged Thr-tRNA(Val) in a tRNA-dependent manner. This Yersinia pestis protein is Valine--tRNA ligase.